A 490-amino-acid polypeptide reads, in one-letter code: Glutamate--tRNA ligase (490 aa).

Residues Pro13–Leu23 carry the 'HIGH' region motif. The 'KMSKS' region signature appears at Lys257–Arg261. Lys260 provides a ligand contact to ATP.

The protein belongs to the class-I aminoacyl-tRNA synthetase family. Glutamate--tRNA ligase type 1 subfamily. As to quaternary structure, monomer.

The protein localises to the cytoplasm. The catalysed reaction is tRNA(Glu) + L-glutamate + ATP = L-glutamyl-tRNA(Glu) + AMP + diphosphate. In terms of biological role, catalyzes the attachment of glutamate to tRNA(Glu) in a two-step reaction: glutamate is first activated by ATP to form Glu-AMP and then transferred to the acceptor end of tRNA(Glu). The chain is Glutamate--tRNA ligase from Mycobacterium tuberculosis (strain ATCC 25177 / H37Ra).